Consider the following 209-residue polypeptide: Small ribosomal subunit protein uS4 (209 aa).

Residues arginine 98–glycine 166 form the S4 RNA-binding domain.

It belongs to the universal ribosomal protein uS4 family. Part of the 30S ribosomal subunit. Contacts protein S5. The interaction surface between S4 and S5 is involved in control of translational fidelity.

Functionally, one of the primary rRNA binding proteins, it binds directly to 16S rRNA where it nucleates assembly of the body of the 30S subunit. Its function is as follows. With S5 and S12 plays an important role in translational accuracy. This chain is Small ribosomal subunit protein uS4, found in Fervidobacterium nodosum (strain ATCC 35602 / DSM 5306 / Rt17-B1).